The following is a 466-amino-acid chain: Asparagine--tRNA ligase (466 aa).

Belongs to the class-II aminoacyl-tRNA synthetase family. In terms of assembly, homodimer.

Its subcellular location is the cytoplasm. The catalysed reaction is tRNA(Asn) + L-asparagine + ATP = L-asparaginyl-tRNA(Asn) + AMP + diphosphate + H(+). The chain is Asparagine--tRNA ligase from Shewanella pealeana (strain ATCC 700345 / ANG-SQ1).